The chain runs to 406 residues: Formate-dependent phosphoribosylglycinamide formyltransferase (406 aa).

Residues glutamate 27–leucine 28 and glutamate 87 each bind N(1)-(5-phospho-beta-D-ribosyl)glycinamide. Residues arginine 120, lysine 162, serine 167 to glutamine 172, glutamate 202 to isoleucine 205, and glutamate 210 contribute to the ATP site. The 196-residue stretch at arginine 125–leucine 320 folds into the ATP-grasp domain. Mg(2+) contacts are provided by glutamate 279 and glutamate 291. Residues aspartate 298, lysine 367, and arginine 374 to arginine 375 each bind N(1)-(5-phospho-beta-D-ribosyl)glycinamide.

Belongs to the PurK/PurT family. In terms of assembly, homodimer.

It carries out the reaction N(1)-(5-phospho-beta-D-ribosyl)glycinamide + formate + ATP = N(2)-formyl-N(1)-(5-phospho-beta-D-ribosyl)glycinamide + ADP + phosphate + H(+). It participates in purine metabolism; IMP biosynthesis via de novo pathway; N(2)-formyl-N(1)-(5-phospho-D-ribosyl)glycinamide from N(1)-(5-phospho-D-ribosyl)glycinamide (formate route): step 1/1. Its function is as follows. Involved in the de novo purine biosynthesis. Catalyzes the transfer of formate to 5-phospho-ribosyl-glycinamide (GAR), producing 5-phospho-ribosyl-N-formylglycinamide (FGAR). Formate is provided by PurU via hydrolysis of 10-formyl-tetrahydrofolate. This Bordetella parapertussis (strain 12822 / ATCC BAA-587 / NCTC 13253) protein is Formate-dependent phosphoribosylglycinamide formyltransferase.